Reading from the N-terminus, the 216-residue chain is UPF0502 protein VCM66_A0698 (216 aa).

Belongs to the UPF0502 family.

This is UPF0502 protein VCM66_A0698 from Vibrio cholerae serotype O1 (strain M66-2).